The sequence spans 296 residues: MDFWPEFMATSWGREFVAGGFGGVAGIISGYPLDTLRIRQQQSSKSGSAFSILRRMLAIEGPSSLYRGMAAPLASVTFQNAMVFQIYAIFSRSFDSSVPLVEPPSYRGVALGGVATGAVQSLLLTPVELIKIRLQLQQTKSGPITLAKSILRRQGLQGLYRGLTITVLRDAPAHGLYFWTYEYVRERLHPGCRKTGQENLRTMLVAGGLAGVASWVACYPLDVVKTRLQQGHGAYEGIADCFRKSVKQEGYTVLWRGLGTAVARAFVVNGAIFAAYEVALRCLFNQSPSPDIVTGD.

3 Solcar repeats span residues 13 to 93 (GREF…FSRS), 104 to 187 (PSYR…VRER), and 198 to 282 (ENLR…ALRC). 6 consecutive transmembrane segments (helical) span residues 16–36 (FVAG…LDTL), 70–90 (AAPL…YAIF), 110–130 (ALGG…VELI), 162–181 (GLTI…FWTY), 204–224 (LVAG…LDVV), and 260–280 (TAVA…EVAL).

Belongs to the mitochondrial carrier (TC 2.A.29) family. As to expression, high expression in flowers, stamens, petals and pollen. Expressed in roots, leaves and stems.

The protein resides in the mitochondrion inner membrane. Inhibited by mercuric chloride. In terms of biological role, mitochondrial arginine transporter that catalyzes the counter-exchange of arginine with lysine, ornithine, arginine, histidine and citrulline. Substrate preference in reconstituted proteoliposomes is arginine &gt; homoarginine &gt; citrulline &gt; histidine &gt; lysine &gt; ornithine. May be involved in the delivery of arginine, released from seed reserves, to mitochondrial arginase and the export of ornithine. May contribute to proline accumulation in response to hyperosmotic stress. This Arabidopsis thaliana (Mouse-ear cress) protein is Mitochondrial arginine transporter BAC2 (BAC2).